The sequence spans 60 residues: UPF0337 protein SAV1625 (60 aa).

The segment at 18–41 (VGNVTDNKELEKEGQQDKATGKAK) is disordered. A compositionally biased stretch (basic and acidic residues) spans 23–41 (DNKELEKEGQQDKATGKAK).

It belongs to the UPF0337 (CsbD) family.

This Staphylococcus aureus (strain Mu50 / ATCC 700699) protein is UPF0337 protein SAV1625.